Consider the following 361-residue polypeptide: Feruloyl CoA ortho-hydroxylase 2 (361 aa).

Residues 211-312 enclose the Fe2OG dioxygenase domain; sequence GSTRINLNYY…RISVPIFVSP (102 aa). Residue Y220 coordinates 2-oxoglutarate. 3 residues coordinate Fe cation: H235, D237, and H293. 2-oxoglutarate contacts are provided by R303 and S305.

It belongs to the iron/ascorbate-dependent oxidoreductase family. The cofactor is L-ascorbate. Fe(2+) is required as a cofactor. As to expression, low expression in roots.

It catalyses the reaction (E)-feruloyl-CoA + 2-oxoglutarate + O2 = (E)-6-hydroxyferuloyl-CoA + succinate + CO2. The catalysed reaction is (E)-6-hydroxyferuloyl-CoA = scopoletin + CoA. Functionally, 2-oxoglutarate (OG)- and Fe(II)-dependent dioxygenase (2OGD)involved in scopoletin biosynthesis. Converts feruloyl CoA into 6'-hydroxyferuloyl CoA but has no activity with ferulic acid, feruloylquinic acid, caffeic acid, caffeoyl CoA, p-coumaric acid, cinnamic acid, cinnamoyl CoA or benzoyl CoA. This chain is Feruloyl CoA ortho-hydroxylase 2, found in Arabidopsis thaliana (Mouse-ear cress).